The chain runs to 125 residues: Mitochondrial import inner membrane translocase subunit TIM16 (125 aa).

A J-like region spans residues 58–110 (EAQQILNVSKLSPEEVQKNYEHLFKVNDKSVGGSFYLQSKVVRAKERLDEELR). Position 69 is a phosphoserine (S69).

The protein belongs to the TIM16/PAM16 family. In terms of assembly, probable component of the PAM complex at least composed of a mitochondrial HSP70 protein, GRPEL1 or GRPEL2, TIMM44, TIMM16/PAM16 and TIMM14/DNAJC19. Interacts with DNAJC19. Directly interacts with DNAJC15; this interaction counteracts DNAJC15-dependent stimulation of HSPA9 ATPase activity. Associates with the TIM23 complex. Expressed in trabecular bone and cartilage and by differentiated chondrocytes localized in the hypertrophic zone and by osteoblasts at early developmental stages.

It is found in the mitochondrion inner membrane. Its function is as follows. Regulates ATP-dependent protein translocation into the mitochondrial matrix. Inhibits DNAJC19 stimulation of HSPA9/Mortalin ATPase activity. This is Mitochondrial import inner membrane translocase subunit TIM16 from Mus musculus (Mouse).